The sequence spans 348 residues: Heat-inducible transcription repressor HrcA (348 aa).

It belongs to the HrcA family.

In terms of biological role, negative regulator of class I heat shock genes (grpE-dnaK-dnaJ and groELS operons). Prevents heat-shock induction of these operons. The polypeptide is Heat-inducible transcription repressor HrcA (Lacticaseibacillus casei (strain BL23) (Lactobacillus casei)).